The chain runs to 2282 residues: Protein Ycf2 (2282 aa).

1635-1642 is a binding site for ATP; it reads GSIGTGRS.

The protein belongs to the Ycf2 family.

Its subcellular location is the plastid. The protein resides in the chloroplast stroma. Its function is as follows. Probable ATPase of unknown function. Its presence in a non-photosynthetic plant (Epifagus virginiana) and experiments in tobacco indicate that it has an essential function which is probably not related to photosynthesis. This chain is Protein Ycf2, found in Populus alba (White poplar).